Here is a 374-residue protein sequence, read N- to C-terminus: Quinolinate synthase (374 aa).

Positions 53 and 70 each coordinate iminosuccinate. [4Fe-4S] cluster is bound at residue C116. Iminosuccinate contacts are provided by residues 148-150 (YMN) and S169. C236 serves as a coordination point for [4Fe-4S] cluster. Residues 262–264 (HPE) and T279 each bind iminosuccinate. C327 lines the [4Fe-4S] cluster pocket.

The protein belongs to the quinolinate synthase family. Type 3 subfamily. [4Fe-4S] cluster serves as cofactor.

The protein localises to the cytoplasm. The enzyme catalyses iminosuccinate + dihydroxyacetone phosphate = quinolinate + phosphate + 2 H2O + H(+). Its pathway is cofactor biosynthesis; NAD(+) biosynthesis; quinolinate from iminoaspartate: step 1/1. Functionally, catalyzes the condensation of iminoaspartate with dihydroxyacetone phosphate to form quinolinate. This chain is Quinolinate synthase, found in Haloarcula marismortui (strain ATCC 43049 / DSM 3752 / JCM 8966 / VKM B-1809) (Halobacterium marismortui).